A 466-amino-acid chain; its full sequence is Glutamate--tRNA ligase (466 aa).

The 'HIGH' region signature appears at 10 to 20 (PSPTGYLHVGG). 4 residues coordinate Zn(2+): cysteine 99, cysteine 101, cysteine 126, and aspartate 128. Residues 237–241 (RLSKR) carry the 'KMSKS' region motif. Position 240 (lysine 240) interacts with ATP.

The protein belongs to the class-I aminoacyl-tRNA synthetase family. Glutamate--tRNA ligase type 1 subfamily. Monomer. Requires Zn(2+) as cofactor.

Its subcellular location is the cytoplasm. It carries out the reaction tRNA(Glu) + L-glutamate + ATP = L-glutamyl-tRNA(Glu) + AMP + diphosphate. Catalyzes the attachment of glutamate to tRNA(Glu) in a two-step reaction: glutamate is first activated by ATP to form Glu-AMP and then transferred to the acceptor end of tRNA(Glu). The sequence is that of Glutamate--tRNA ligase from Geobacter sulfurreducens (strain ATCC 51573 / DSM 12127 / PCA).